Consider the following 295-residue polypeptide: Bifunctional protein FolD (295 aa).

NADP(+) is bound by residues 165–167, Ser-190, and Ile-231; that span reads GRS.

Belongs to the tetrahydrofolate dehydrogenase/cyclohydrolase family. As to quaternary structure, homodimer.

The enzyme catalyses (6R)-5,10-methylene-5,6,7,8-tetrahydrofolate + NADP(+) = (6R)-5,10-methenyltetrahydrofolate + NADPH. The catalysed reaction is (6R)-5,10-methenyltetrahydrofolate + H2O = (6R)-10-formyltetrahydrofolate + H(+). Its pathway is one-carbon metabolism; tetrahydrofolate interconversion. In terms of biological role, catalyzes the oxidation of 5,10-methylenetetrahydrofolate to 5,10-methenyltetrahydrofolate and then the hydrolysis of 5,10-methenyltetrahydrofolate to 10-formyltetrahydrofolate. The sequence is that of Bifunctional protein FolD from Nitrosomonas europaea (strain ATCC 19718 / CIP 103999 / KCTC 2705 / NBRC 14298).